The primary structure comprises 478 residues: Secretogranin-3 (478 aa).

A signal peptide spans 1–21 (MASKRLGFVVVLALVCQHINA). Disordered regions lie at residues 22-126 (FPTP…NGMD) and 208-287 (IGDR…EDGL). Residues 28–42 (PDDKYNRELTEEKPL) are compositionally biased toward basic and acidic residues. The segment covering 63 to 74 (AEEETNSEDDDI) has biased composition (acidic residues). The segment covering 97 to 120 (ANERLGADDTDSTKNRRLADDYDS) has biased composition (basic and acidic residues). Residues 235-259 (DEEDEVENEGGDDANGDEPQEEESR) show a composition bias toward acidic residues.

It is found in the cytoplasmic vesicle. The protein resides in the secretory vesicle lumen. It localises to the secretory vesicle membrane. Its subcellular location is the secreted. This is Secretogranin-3 (scg3) from Danio rerio (Zebrafish).